Here is a 236-residue protein sequence, read N- to C-terminus: 7-cyano-7-deazaguanine synthase (236 aa).

7 to 17 provides a ligand contact to ATP; the sequence is CSGGLDSVSLA. Zn(2+)-binding residues include cysteine 185, cysteine 193, cysteine 196, and cysteine 199.

Belongs to the QueC family. Zn(2+) is required as a cofactor.

The catalysed reaction is 7-carboxy-7-deazaguanine + NH4(+) + ATP = 7-cyano-7-deazaguanine + ADP + phosphate + H2O + H(+). It functions in the pathway purine metabolism; 7-cyano-7-deazaguanine biosynthesis. Catalyzes the ATP-dependent conversion of 7-carboxy-7-deazaguanine (CDG) to 7-cyano-7-deazaguanine (preQ(0)). The sequence is that of 7-cyano-7-deazaguanine synthase from Rhizobium meliloti (strain 1021) (Ensifer meliloti).